Reading from the N-terminus, the 315-residue chain is ATP synthase gamma chain (315 aa).

It belongs to the ATPase gamma chain family. As to quaternary structure, F-type ATPases have 2 components, CF(1) - the catalytic core - and CF(0) - the membrane proton channel. CF(1) has five subunits: alpha(3), beta(3), gamma(1), delta(1), epsilon(1). CF(0) has three main subunits: a, b and c.

It is found in the cellular thylakoid membrane. Its function is as follows. Produces ATP from ADP in the presence of a proton gradient across the membrane. The gamma chain is believed to be important in regulating ATPase activity and the flow of protons through the CF(0) complex. The sequence is that of ATP synthase gamma chain from Synechococcus sp. (strain RCC307).